The sequence spans 332 residues: Anthranilate phosphoribosyltransferase (332 aa).

5-phospho-alpha-D-ribose 1-diphosphate-binding positions include Gly-79, 82–83, Ser-87, 89–92, 107–115, and Ser-119; these read GD, NIST, and KHGNRSVSS. An anthranilate-binding site is contributed by Gly-79. Ser-91 is a binding site for Mg(2+). Asn-110 contacts anthranilate. Arg-165 contributes to the anthranilate binding site. Asp-223 and Glu-224 together coordinate Mg(2+).

It belongs to the anthranilate phosphoribosyltransferase family. As to quaternary structure, homodimer. Mg(2+) is required as a cofactor.

It carries out the reaction N-(5-phospho-beta-D-ribosyl)anthranilate + diphosphate = 5-phospho-alpha-D-ribose 1-diphosphate + anthranilate. It functions in the pathway amino-acid biosynthesis; L-tryptophan biosynthesis; L-tryptophan from chorismate: step 2/5. Functionally, catalyzes the transfer of the phosphoribosyl group of 5-phosphorylribose-1-pyrophosphate (PRPP) to anthranilate to yield N-(5'-phosphoribosyl)-anthranilate (PRA). This Yersinia pseudotuberculosis serotype O:3 (strain YPIII) protein is Anthranilate phosphoribosyltransferase.